The chain runs to 229 residues: UPF0173 metal-dependent hydrolase SAOUHSC_01815 (229 aa).

It belongs to the UPF0173 family.

The sequence is that of UPF0173 metal-dependent hydrolase SAOUHSC_01815 from Staphylococcus aureus (strain NCTC 8325 / PS 47).